The primary structure comprises 434 residues: Arrestin domain-containing protein 1 (434 aa).

The disordered stretch occupies residues 295–345; the sequence is PGPGSSPGLLSPVVPSAPPQEEAEAVASGPHFSDPVSLSTKSHSQQQPLST. A compositionally biased stretch (polar residues) spans 330–342; that stretch reads VSLSTKSHSQQQP. Short sequence motifs (PPxY motif) lie at residues 401–404 and 414–417; these read PPEY and PPSY.

This sequence belongs to the arrestin family. In terms of assembly, interacts (via PPxY motifs) with ITCH (via WW domains); the interaction is direct and participates in the recruitment of the ubiquitin-protein ligase ITCH to the NOTCH1 receptor. Interacts with ARRB1 and ARRB2; the interaction is direct. Interacts with TSG101; may recruit TSG101 to the plasma membrane. Interacts (via PPxY motifs) with WWP2 (via WW domains); ubiquitinates ARRDC1. Interacts with SLC11A2; controls the incorporation of SLC11A2 into extracellular vesicles through an ubiquitination-dependent mechanism. Interacts with WWP1 (via WW domains). Interacts with NEDD4 (via WW domains). Interacts with PDCD6IP. Post-translationally, ubiquitinated. Ubiquitination by WWP2; promotes localization to extracellular microvesicles. Ubiquitinated by WWP1.

It is found in the cell membrane. Functions as an adapter recruiting ubiquitin-protein ligases to their specific substrates. Through an ubiquitination-dependent mechanism plays for instance a role in the incorporation of SLC11A2 into extracellular vesicles. More generally, plays a role in the extracellular transport of proteins between cells through the release in the extracellular space of microvesicles. By participating in the ITCH-mediated ubiquitination and subsequent degradation of NOTCH1, negatively regulates the NOTCH signaling pathway. The polypeptide is Arrestin domain-containing protein 1 (Rattus norvegicus (Rat)).